A 301-amino-acid polypeptide reads, in one-letter code: RNA polymerase II holoenzyme cyclin-like subunit (301 aa).

The region spanning 53-142 (QQLIKLGKRT…LGECEFALIS (90 aa)) is the Cyclin N-terminal domain.

It belongs to the cyclin family. Cyclin C subfamily. As to quaternary structure, component of the srb8-11 complex, a regulatory module of the Mediator complex.

It is found in the nucleus. In terms of biological role, component of the srb8-11 complex. The srb8-11 complex is a regulatory module of the Mediator complex which is itself involved in regulation of basal and activated RNA polymerase II-dependent transcription. The srb8-11 complex may be involved in the transcriptional repression of a subset of genes regulated by Mediator. It may inhibit the association of the Mediator complex with RNA polymerase II to form the holoenzyme complex. The srb8-11 complex phosphorylates the C-terminal domain (CTD) of the largest subunit of RNA polymerase II. In Aspergillus terreus (strain NIH 2624 / FGSC A1156), this protein is RNA polymerase II holoenzyme cyclin-like subunit (ssn8).